Reading from the N-terminus, the 609-residue chain is MTIDNPSAFLKTLPTGSGVYQMQDAQGKVIYVGKARNLQKRVSSYFRRQLDSKTQAMMAQVQSIQTTITRNENEALLLEASFIKQFRPRYNVLLRDDKSYPYLYLATHQKFPRLDFYRGAKKAPGRYFGPYPNAGSVRENLALIQKLFKLRQCSESFFKNRTRPCLQYQIKRCTAPCVGYVNEQEYRRQVEDAILFFEGKNDQVIIKLTERMEVASENLVFEEAAHYRDQIRQLRRLQKQQIITGGKGNIDIIGIAESNGAIGFAILFIRSGRMIGHKPFFPNTPLGTTLQTALVEFIPQYYLSPLRNGDIPERIVTSEPLEDRLWIQRALSSGLNRKLAITDQKRAPYKQWQAMAALNAAQALSQHLAQKNTFALKLEAIQKSLALPNPIARIECFDISHTLGEATVASCVVFGEEGPIKKDYRRFNISGVTPGDDYGALRQALTRRYVRLKEGEGILPDVLLIDGGMGQLRQAAEVLEELQVSGVILTAIAKGPGRKAGLEKLFVWGRREEIHLPADNIAFHLIQQIRDEAHRFAITAHCNRRAKRRVESTLQEIEGIGPKRRQKLLKYFGGLQELQRASIEEIARVPGVSETLAKAIYDACHQHKG.

The 78-residue stretch at 15 to 92 (TGSGVYQMQD…IKQFRPRYNV (78 aa)) folds into the GIY-YIG domain. Positions 202 to 237 (DQVIIKLTERMEVASENLVFEEAAHYRDQIRQLRRL) constitute a UVR domain.

This sequence belongs to the UvrC family. In terms of assembly, interacts with UvrB in an incision complex.

It localises to the cytoplasm. Its function is as follows. The UvrABC repair system catalyzes the recognition and processing of DNA lesions. UvrC both incises the 5' and 3' sides of the lesion. The N-terminal half is responsible for the 3' incision and the C-terminal half is responsible for the 5' incision. The polypeptide is UvrABC system protein C (Coxiella burnetii (strain RSA 331 / Henzerling II)).